The following is a 258-amino-acid chain: NAD(P)H-hydrate epimerase (258 aa).

Positions 15-244 constitute a YjeF N-terminal domain; it reads AFQLDQELMS…RIAKEYGIED (230 aa). 75-79 serves as a coordination point for (6S)-NADPHX; it reads NNGGD. The K(+) site is built by N76 and D145. (6S)-NADPHX contacts are provided by residues 149–155 and D181; that span reads GFSFKPP. S184 contributes to the K(+) binding site.

It belongs to the NnrE/AIBP family. Requires K(+) as cofactor.

It is found in the cytoplasm. Its subcellular location is the mitochondrion. The enzyme catalyses (6R)-NADHX = (6S)-NADHX. It carries out the reaction (6R)-NADPHX = (6S)-NADPHX. Functionally, catalyzes the epimerization of the S- and R-forms of NAD(P)HX, a damaged form of NAD(P)H that is a result of enzymatic or heat-dependent hydration. This is a prerequisite for the S-specific NAD(P)H-hydrate dehydratase to allow the repair of both epimers of NAD(P)HX. In Candida albicans (strain SC5314 / ATCC MYA-2876) (Yeast), this protein is NAD(P)H-hydrate epimerase.